A 285-amino-acid chain; its full sequence is uncharacterized protein (285 aa).

Positions 92–199 constitute a Guanylate cyclase domain; it reads TLLLADVEES…PTINRTARLR (108 aa).

This sequence belongs to the adenylyl cyclase class-4/guanylyl cyclase family.

This is an uncharacterized protein from Mycobacterium tuberculosis (strain ATCC 25618 / H37Rv).